Consider the following 304-residue polypeptide: Acetyl-coenzyme A carboxylase carboxyl transferase subunit beta (304 aa).

The CoA carboxyltransferase N-terminal domain maps to 25–294; sequence LWIKCPETGE…EAARRESGSQ (270 aa).

Belongs to the AccD/PCCB family. In terms of assembly, acetyl-CoA carboxylase is a heterohexamer composed of biotin carboxyl carrier protein (AccB), biotin carboxylase (AccC) and two subunits each of ACCase subunit alpha (AccA) and ACCase subunit beta (AccD).

The protein resides in the cytoplasm. It catalyses the reaction N(6)-carboxybiotinyl-L-lysyl-[protein] + acetyl-CoA = N(6)-biotinyl-L-lysyl-[protein] + malonyl-CoA. It functions in the pathway lipid metabolism; malonyl-CoA biosynthesis; malonyl-CoA from acetyl-CoA: step 1/1. In terms of biological role, component of the acetyl coenzyme A carboxylase (ACC) complex. Biotin carboxylase (BC) catalyzes the carboxylation of biotin on its carrier protein (BCCP) and then the CO(2) group is transferred by the transcarboxylase to acetyl-CoA to form malonyl-CoA. This is Acetyl-coenzyme A carboxylase carboxyl transferase subunit beta from Sinorhizobium fredii (strain NBRC 101917 / NGR234).